Reading from the N-terminus, the 125-residue chain is Large ribosomal subunit protein bL12 (125 aa).

It belongs to the bacterial ribosomal protein bL12 family. In terms of assembly, homodimer. Part of the ribosomal stalk of the 50S ribosomal subunit. Forms a multimeric L10(L12)X complex, where L10 forms an elongated spine to which 2 to 4 L12 dimers bind in a sequential fashion. Binds GTP-bound translation factors.

Forms part of the ribosomal stalk which helps the ribosome interact with GTP-bound translation factors. Is thus essential for accurate translation. The chain is Large ribosomal subunit protein bL12 from Liberibacter africanus (Citrus greening disease).